Reading from the N-terminus, the 225-residue chain is N-(5'-phosphoribosyl)anthranilate isomerase (225 aa).

Belongs to the TrpF family.

It carries out the reaction N-(5-phospho-beta-D-ribosyl)anthranilate = 1-(2-carboxyphenylamino)-1-deoxy-D-ribulose 5-phosphate. Its pathway is amino-acid biosynthesis; L-tryptophan biosynthesis; L-tryptophan from chorismate: step 3/5. The sequence is that of N-(5'-phosphoribosyl)anthranilate isomerase from Nitrobacter winogradskyi (strain ATCC 25391 / DSM 10237 / CIP 104748 / NCIMB 11846 / Nb-255).